Here is a 610-residue protein sequence, read N- to C-terminus: Membrane protein insertase YidC (610 aa).

Residues 7–27 (FFITIALSILILALWQVFYLG) traverse the membrane as a helical segment. Residues 36 to 82 (QARIEEQQRQAQQAAQNRQASSSTGDTPQMPANPDSIPGQGDTKAAG) form a disordered region. Residues 44-55 (RQAQQAAQNRQA) are compositionally biased toward low complexity. The next 5 helical transmembrane spans lie at 358–378 (FDLLIDWGWFYFITKPMFYLI), 387–407 (NFGVAILVVTVLLKALFFPLA), 458–478 (WPVLVQIPVFFALYKVLYVTI), 510–530 (TVPHFLMIGVWPIIMGITMFL), and 546–566 (IFTWMPIIFTFMLASFPAGLV).

It belongs to the OXA1/ALB3/YidC family. Type 1 subfamily. As to quaternary structure, interacts with the Sec translocase complex via SecD. Specifically interacts with transmembrane segments of nascent integral membrane proteins during membrane integration.

It is found in the cell inner membrane. Its function is as follows. Required for the insertion and/or proper folding and/or complex formation of integral membrane proteins into the membrane. Involved in integration of membrane proteins that insert both dependently and independently of the Sec translocase complex, as well as at least some lipoproteins. Aids folding of multispanning membrane proteins. This chain is Membrane protein insertase YidC, found in Brucella suis biovar 1 (strain 1330).